The following is a 766-amino-acid chain: Probable serine/threonine-protein kinase KKQ8 (766 aa).

Disordered regions lie at residues 1–165, 201–240, 277–297, 362–384, and 417–437; these read MPEH…DTSS, GHYA…AAQL, SDAN…LDLP, TRSH…DDPS, and AAKN…AGVQ. Over residues 14-25 the composition is skewed to low complexity; sequence RSLSLGSSMRSL. Residues 49–64 are compositionally biased toward basic and acidic residues; the sequence is VDIRVDTASASREHTP. Polar residues predominate over residues 94 to 120; that stretch reads LTPTNSNPQSKSGSPVSQNTSQESLIT. Positions 127–137 are enriched in basic and acidic residues; it reads EDYRPSKDSRR. 2 stretches are compositionally biased toward polar residues: residues 140 to 165 and 214 to 223; these read RNAS…DTSS and PTSSRVPSRS. The span at 288–297 shows a compositional bias: basic and acidic residues; that stretch reads SKNDGHLDLP. The segment covering 372–382 has biased composition (acidic residues); that stretch reads DSSDDDEELDD. Positions 419–430 are enriched in basic residues; it reads KNKHNQSSKHRT. In terms of domain architecture, Protein kinase spans 449–752; that stretch reads GKCVAVVGHG…IDKLLQTGWM (304 aa). Residues 455–463 and Lys-493 each bind ATP; that span reads VGHGAYGVV. The active-site Proton acceptor is Asp-603.

This sequence belongs to the protein kinase superfamily. CAMK Ser/Thr protein kinase family. NPR/HAL subfamily. HAL5 sub-subfamily.

Its subcellular location is the cytoplasm. It catalyses the reaction L-seryl-[protein] + ATP = O-phospho-L-seryl-[protein] + ADP + H(+). The catalysed reaction is L-threonyl-[protein] + ATP = O-phospho-L-threonyl-[protein] + ADP + H(+). The chain is Probable serine/threonine-protein kinase KKQ8 (KKQ8) from Candida glabrata (strain ATCC 2001 / BCRC 20586 / JCM 3761 / NBRC 0622 / NRRL Y-65 / CBS 138) (Yeast).